Reading from the N-terminus, the 707-residue chain is MGDHDVALCHVSRYNHANYWAFVPLPTVSDDTGCDSLHHDSASERIRMAPPASASKAGAAEERLHPYERRLLDQYQIHLQPANRNPLSRADSAAGREETAQTPAQVQMVPVVAVADSTSDQHASVASSQDLVDLFFLEGSQAVDGLCFSPYPIYGWRTAEERRAAVCEVFKTYNVVTRLPASPAALAAAQRRYSRHRHSAIAPINKSAIETREQYWRRLSNLYTQKGVKDAASAADAAATTATNGAVPAAPAYEPEDPFYIIDLGRVVEQMARWRHELPMVRPYFAVKSNPQPAVLEVLSALGAGFDCASKEEIHMVLGRQLVASPDDIIFANPCKQLGDLREAQACGVTYVTVDNPLEMEKISRLMPSAHAIIRIKTNDSKAQCSFSTKFGAPLEDVEGLLEAARQFNVTVCGVSFHVGSGNDDQSAYVSAVRDAYQVFQQAVQYGFKCTILDIGGGFPGTEVVEGSGNTSFEAIARTIRPVLAELFGGGDVTIISEPGRYFTAASHALLMNVFASRTLRLSDVEVSRQAFQSVVSMDEPEEYQYYVNDGLYHSFNCILFDHAHPTLLLLNDGDGADGVESGTEAAAVCSEEEGETSLSGPLANDPLFMSAWDRRRSFARRPLRITTIFGPTCDSMDCILKKQPFPEMKLGDWLLVPDMGSYTTAAAGFFNGFATRRLEWVSSVDLCARPRPVYTREGNTLRCVSE.

A disordered region spans residues 83–102; sequence NRNPLSRADSAAGREETAQT. Lys-288 is modified (N6-(pyridoxal phosphate)lysine). Residues Ser-421, Gly-458, and 498 to 501 contribute to the pyridoxal 5'-phosphate site; that span reads EPGR. 561 to 562 is a binding site for substrate; the sequence is FD. Residue Cys-634 is the Proton donor; shared with dimeric partner of the active site. Asp-635 contributes to the substrate binding site. Residue Tyr-663 participates in pyridoxal 5'-phosphate binding.

The protein belongs to the Orn/Lys/Arg decarboxylase class-II family. In terms of assembly, homodimer. Only the dimer is catalytically active, as the active sites are constructed of residues from both monomers. Requires pyridoxal 5'-phosphate as cofactor.

It carries out the reaction L-ornithine + H(+) = putrescine + CO2. The protein operates within amine and polyamine biosynthesis; putrescine biosynthesis via L-ornithine pathway; putrescine from L-ornithine: step 1/1. Inhibited by antizyme (AZ) in response to polyamine levels. AZ inhibits the assembly of the functional homodimer by binding to ODC monomers and targeting them for ubiquitin-independent proteolytic destruction by the 26S proteasome. Inhibited by 1-amino-oxy-3-aminopropane (APA, an isosteric analog of putrescine). Irreversibly inhibited by alpha-difluoromethylornithine (DFMO, a curative agent of West African sleeping sickness). Catalyzes the first and rate-limiting step of polyamine biosynthesis that converts ornithine into putrescine, which is the precursor for the polyamines, spermidine and spermine. Polyamines are essential for cell proliferation and are implicated in cellular processes, ranging from DNA replication to apoptosis. The sequence is that of Ornithine decarboxylase from Leishmania donovani.